The chain runs to 42 residues: Photosystem I reaction center subunit IX (42 aa).

Residues 7–27 form a helical membrane-spanning segment; it reads YLSTAPVLAALSLGFLAGLLI.

It belongs to the PsaJ family.

Its subcellular location is the plastid. The protein resides in the chloroplast thylakoid membrane. In terms of biological role, may help in the organization of the PsaE and PsaF subunits. This chain is Photosystem I reaction center subunit IX, found in Cryptomeria japonica (Japanese cedar).